Reading from the N-terminus, the 425-residue chain is L-cysteine:1D-myo-inositol 2-amino-2-deoxy-alpha-D-glucopyranoside ligase (425 aa).

Residue C43 coordinates Zn(2+). L-cysteinyl-5'-AMP is bound by residues 43–46, S58, and 81–83; these read CGIT and NVT. Positions 45–55 match the 'HIGH' region motif; the sequence is ITPYDATHMGH. Residues 199-204 carry the 'ERGGDP' region motif; the sequence is ERGGDP. W240 contacts L-cysteinyl-5'-AMP. C244 serves as a coordination point for Zn(2+). Position 262-264 (262-264) interacts with L-cysteinyl-5'-AMP; it reads GSD. H269 is a binding site for Zn(2+). V295 contributes to the L-cysteinyl-5'-AMP binding site. The 'KMSKS' region signature appears at 301-305; sequence KMSKS.

This sequence belongs to the class-I aminoacyl-tRNA synthetase family. MshC subfamily. As to quaternary structure, monomer. The cofactor is Zn(2+).

It carries out the reaction 1D-myo-inositol 2-amino-2-deoxy-alpha-D-glucopyranoside + L-cysteine + ATP = 1D-myo-inositol 2-(L-cysteinylamino)-2-deoxy-alpha-D-glucopyranoside + AMP + diphosphate + H(+). Its function is as follows. Catalyzes the ATP-dependent condensation of GlcN-Ins and L-cysteine to form L-Cys-GlcN-Ins. In Paenarthrobacter aurescens (strain TC1), this protein is L-cysteine:1D-myo-inositol 2-amino-2-deoxy-alpha-D-glucopyranoside ligase.